The following is a 230-amino-acid chain: Large ribosomal subunit protein uL1 (230 aa).

Belongs to the universal ribosomal protein uL1 family. Part of the 50S ribosomal subunit.

Its function is as follows. Binds directly to 23S rRNA. The L1 stalk is quite mobile in the ribosome, and is involved in E site tRNA release. In terms of biological role, protein L1 is also a translational repressor protein, it controls the translation of the L11 operon by binding to its mRNA. The sequence is that of Large ribosomal subunit protein uL1 from Bacillus cereus (strain G9842).